A 228-amino-acid polypeptide reads, in one-letter code: uncharacterized protein (228 aa).

The tRNA-binding domain occupies 99–207; it reads LANKVPFVVC…PKIKVGKPFI (109 aa).

This is an uncharacterized protein from Mycoplasma genitalium (strain ATCC 33530 / DSM 19775 / NCTC 10195 / G37) (Mycoplasmoides genitalium).